The sequence spans 61 residues: Large ribosomal subunit protein uL29 (61 aa).

The protein belongs to the universal ribosomal protein uL29 family.

This chain is Large ribosomal subunit protein uL29, found in Nitratidesulfovibrio vulgaris (strain ATCC 29579 / DSM 644 / CCUG 34227 / NCIMB 8303 / VKM B-1760 / Hildenborough) (Desulfovibrio vulgaris).